Here is a 512-residue protein sequence, read N- to C-terminus: MSLKAEEITSIIKSKIANFTPQADINETGTVLQVGDGIARIYGLKNAVAGELLEFPNNVKGLALNLETDNIGCVLMGEDSSIQEGDPVKRTGQVINVPVGDALLGRVVDPLGKPLDGKGPIKTNSSRPLEIVAPGVIERQPVKQPLQTGLKAIDSLVPIGKGQRELIIGDRQTGKTAIAIDAILNQKNQPADQRTLCVYVAIGQKQSTVAQVVQTLTEFGAMEYTVIVSASAADPASLLYIAPYAGSSIAEEFMWNKRDVLIIYDDLSKHAQAYRQMSLLLRRPPGREAYPGDVFYLHSRLLERACKLSDKNGGGSITALPIIETQANDMSAYIPTNVISITDGQIYLESGLFHSGMKPAVNVGLSVSRVGGSAQKKIMRSVSGTLRLDMSQYKELEAFSQFGSDLDKESQQQLTRGKRINELFKQDQYTPMPVEEQVLVFFAGTNGFLDNIEVNLVKEYEKQLLTYFKAEKKDLFEELKNAPEMSENLTNKLKEALTAFGEVFKNSHSTAQ.

Residue 169-176 (GDRQTGKT) participates in ATP binding.

The protein belongs to the ATPase alpha/beta chains family. In terms of assembly, F-type ATPases have 2 components, CF(1) - the catalytic core - and CF(0) - the membrane proton channel. CF(1) has five subunits: alpha(3), beta(3), gamma(1), delta(1), epsilon(1). CF(0) has three main subunits: a(1), b(2) and c(9-12). The alpha and beta chains form an alternating ring which encloses part of the gamma chain. CF(1) is attached to CF(0) by a central stalk formed by the gamma and epsilon chains, while a peripheral stalk is formed by the delta and b chains.

It is found in the cell membrane. The enzyme catalyses ATP + H2O + 4 H(+)(in) = ADP + phosphate + 5 H(+)(out). Functionally, produces ATP from ADP in the presence of a proton gradient across the membrane. The alpha chain is a regulatory subunit. The chain is ATP synthase subunit alpha from Elusimicrobium minutum (strain Pei191).